Consider the following 461-residue polypeptide: UDP-glycosyltransferase 82A1 (461 aa).

UDP-alpha-D-glucose-binding positions include Ser292, 349–351 (APQ), 366–374 (HCGWNSTME), and 388–391 (AGDQ).

This sequence belongs to the UDP-glycosyltransferase family.

This Arabidopsis thaliana (Mouse-ear cress) protein is UDP-glycosyltransferase 82A1 (UGT82A1).